The sequence spans 78 residues: Translational regulator CsrA (78 aa).

This sequence belongs to the CsrA/RsmA family. In terms of assembly, homodimer; the beta-strands of each monomer intercalate to form a hydrophobic core, while the alpha-helices form wings that extend away from the core.

Its subcellular location is the cytoplasm. A translational regulator that binds mRNA to regulate translation initiation and/or mRNA stability. Usually binds in the 5'-UTR at or near the Shine-Dalgarno sequence preventing ribosome-binding, thus repressing translation. Its main target seems to be the major flagellin gene, while its function is anatagonized by FliW. In Nitratidesulfovibrio vulgaris (strain ATCC 29579 / DSM 644 / CCUG 34227 / NCIMB 8303 / VKM B-1760 / Hildenborough) (Desulfovibrio vulgaris), this protein is Translational regulator CsrA.